A 184-amino-acid polypeptide reads, in one-letter code: UPF0316 protein YebE (184 aa).

The next 3 helical transmembrane spans lie at 9 to 29, 41 to 61, and 67 to 87; these read GIAM…FFTI, LAAG…SLVL, and IQNV…GMKI.

This sequence belongs to the UPF0316 family.

It is found in the cell membrane. This Bacillus subtilis (strain 168) protein is UPF0316 protein YebE (yebE).